We begin with the raw amino-acid sequence, 96 residues long: Co-chaperonin GroES (96 aa).

Belongs to the GroES chaperonin family. In terms of assembly, heptamer of 7 subunits arranged in a ring. Interacts with the chaperonin GroEL.

It is found in the cytoplasm. Functionally, together with the chaperonin GroEL, plays an essential role in assisting protein folding. The GroEL-GroES system forms a nano-cage that allows encapsulation of the non-native substrate proteins and provides a physical environment optimized to promote and accelerate protein folding. GroES binds to the apical surface of the GroEL ring, thereby capping the opening of the GroEL channel. This Caulobacter vibrioides (strain ATCC 19089 / CIP 103742 / CB 15) (Caulobacter crescentus) protein is Co-chaperonin GroES.